A 648-amino-acid polypeptide reads, in one-letter code: ABC transporter G family member 14 (648 aa).

The 252-residue stretch at 53–304 folds into the ABC transporter domain; sequence LKFEEVVYKV…FSSLGFSTSL (252 aa). Position 99–106 (99–106) interacts with ATP; that stretch reads GPSGSGKT. Asn-346 carries N-linked (GlcNAc...) asparagine glycosylation. One can recognise an ABC transmembrane type-2 domain in the interval 384–590; that stretch reads YQFTVLLQRG…CYKLLLGIQY (207 aa). Transmembrane regions (helical) follow at residues 405-425, 435-455, 485-505, 512-532, 543-562, 569-591, and 620-640; these read LRIFQVISVAFLGGLLWWHTP, LLFFFSVFWGFYPLYNAVFTF, LPLELALPTAFVFIIYWMGGL, FILSLLVVLYSVLVAQGLGLA, ATTLASVTTLVFLIAGGYYV, IVWLKYLSYSYYCYKLLLGIQYT, and LWIDVFVMGVMLVGYRLMAYM.

It belongs to the ABC transporter superfamily. ABCG family. Eye pigment precursor importer (TC 3.A.1.204) subfamily. As to quaternary structure, forms heterodimers with ABCG11. In terms of tissue distribution, accumulates primarily in the pericycle and stelar cells of roots. Expressed in leaves, stems, flowers and siliques, and, at low levels, in roots. Accumulates in the phloem.

Its subcellular location is the cell membrane. Its function is as follows. Positive regulator of plant growth which acts as an efflux pump involved in the major root-to-shoot (acropetal) long-distance cytokinin (CK) transport via the xylem sap. Together with ABCG9 and ABCG11, required for vascular development by regulating lipid/sterol homeostasis. Involved in CK-dependent responses to oxidative stress such as hydrogen peroxide H(2)O(2). Functionally, (Microbial infection) Required for SNC1-mediated defense response against the virulent pathogen Pseudomonas syringae pv. tomato DC3000 by promoting the accumulation of trans-zeatin (tZ)-type cytokinins (CK) in the shoot. This Arabidopsis thaliana (Mouse-ear cress) protein is ABC transporter G family member 14.